The chain runs to 462 residues: Acetate--CoA ligase [ADP-forming] I subunit alpha (462 aa).

This sequence belongs to the acetate CoA ligase alpha subunit family. Heterotetramer of two alpha and two beta subunits.

It localises to the cytoplasm. It carries out the reaction acetate + ATP + CoA = acetyl-CoA + ADP + phosphate. With respect to regulation, activity is dependent on magnesium. In terms of biological role, catalyzes the reversible formation of acetate and ATP from acetyl-CoA by using ADP and phosphate. Can use other substrates such as isobutyryl-CoA, propionyl-CoA and butyryl-CoA, but not indoleacetyl-CoA, phenylacetyl-CoA or succinyl-CoA. Seems to be involved primarily in the conversion of acetyl-CoA to acetate. Participates in the degradation of branched-chain amino acids via branched-chain-acyl-CoA esters. The polypeptide is Acetate--CoA ligase [ADP-forming] I subunit alpha (Pyrococcus furiosus (strain ATCC 43587 / DSM 3638 / JCM 8422 / Vc1)).